The sequence spans 182 residues: MFKYIGDIVKGTGTQLRSLVMVFGHGFRKRDTLQYPEEQVYLPPRYRGRIVLTRDPDGEERCVACNLCAVACPVGCISLQKAETEDGRWYPDFFRINFSRCIFCGLCEEACPTTAIQLTPDFEMADFKRQDLVYEKEDLLISGPGKNPDYNFYRVAGMAIGGKPKGSAQNEAEPINVKSLLP.

2 4Fe-4S ferredoxin-type domains span residues leucine 52–alanine 82 and aspartate 92–aspartate 121. Residues cysteine 62, cysteine 65, cysteine 68, cysteine 72, cysteine 101, cysteine 104, cysteine 107, and cysteine 111 each contribute to the [4Fe-4S] cluster site.

It belongs to the complex I 23 kDa subunit family. NDH-1 is composed of 13 different subunits. Subunits NuoA, H, J, K, L, M, N constitute the membrane sector of the complex. The cofactor is [4Fe-4S] cluster.

It is found in the cell inner membrane. It carries out the reaction a quinone + NADH + 5 H(+)(in) = a quinol + NAD(+) + 4 H(+)(out). Its function is as follows. NDH-1 shuttles electrons from NADH, via FMN and iron-sulfur (Fe-S) centers, to quinones in the respiratory chain. The immediate electron acceptor for the enzyme in this species is believed to be ubiquinone. Couples the redox reaction to proton translocation (for every two electrons transferred, four hydrogen ions are translocated across the cytoplasmic membrane), and thus conserves the redox energy in a proton gradient. In Pseudomonas savastanoi pv. phaseolicola (strain 1448A / Race 6) (Pseudomonas syringae pv. phaseolicola (strain 1448A / Race 6)), this protein is NADH-quinone oxidoreductase subunit I.